Reading from the N-terminus, the 719-residue chain is Polyphosphate kinase (719 aa).

Asn47 serves as a coordination point for ATP. Mg(2+)-binding residues include Arg377 and Arg407. His437 (phosphohistidine intermediate) is an active-site residue. Residues Tyr470, Arg566, and His594 each coordinate ATP.

Belongs to the polyphosphate kinase 1 (PPK1) family. It depends on Mg(2+) as a cofactor. In terms of processing, an intermediate of this reaction is the autophosphorylated ppk in which a phosphate is covalently linked to a histidine residue through a N-P bond.

It catalyses the reaction [phosphate](n) + ATP = [phosphate](n+1) + ADP. Catalyzes the reversible transfer of the terminal phosphate of ATP to form a long-chain polyphosphate (polyP). This is Polyphosphate kinase from Exiguobacterium sibiricum (strain DSM 17290 / CCUG 55495 / CIP 109462 / JCM 13490 / 255-15).